Here is a 586-residue protein sequence, read N- to C-terminus: Dynein axonemal assembly factor 3 (586 aa).

A disordered region spans residues 455–493 (PGGGDSAVESGPAPSKVESTRAPLPESISPPQANQAPSL).

The protein belongs to the DNAAF3 family.

Its subcellular location is the cytoplasm. The protein resides in the dynein axonemal particle. In terms of biological role, required for the assembly of axonemal inner and outer dynein arms. Involved in preassembly of dyneins into complexes before their transport into cilia. This chain is Dynein axonemal assembly factor 3 (Dnaaf3), found in Mus musculus (Mouse).